We begin with the raw amino-acid sequence, 415 residues long: Fructose-like permease IIC component (415 aa).

Topologically, residues 1 to 46 (MAIKKRSATVVHGASGAAAAVKNPQASKSSFWGELPQHVMSGISRM) are cytoplasmic. A PTS EIIC type-2 domain is found at 35–415 (LPQHVMSGIS…RKGKLLIESL (381 aa)). The helical transmembrane segment at 47–67 (VPTLIMGGVILAFSQLIAYSW) threads the bilayer. Residues 68 to 101 (LKIPADIGIMDALNSGKFSGFDLSLLKFAWLSQS) lie on the Periplasmic side of the membrane. Residues 102–122 (FGGVLFGFAIPMFAAFVANSI) form a helical membrane-spanning segment. Over 123–126 (GGKL) the chain is Cytoplasmic. Residues 127–147 (AFPAGFIGGLMSTQPTQLLNF) form a helical membrane-spanning segment. The Periplasmic segment spans residues 148–157 (DPSTMQWATS). The chain crosses the membrane as a helical span at residues 158–178 (SPVPSTFIGALIISIVAGYLV). Over 179 to 197 (KWMNQKIQLPDFLLAFKTT) the chain is Cytoplasmic. Residues 198-218 (FLLPILSAIFVMLAMYYVITP) form a helical membrane-spanning segment. Over 219-237 (FGGWINGGIRTVLTAAGEK) the chain is Periplasmic. Residues 238 to 258 (GALMYAMGIAAATAIDLGGPI) form a helical membrane-spanning segment. At 259 to 276 (NKAAGFVAFSFTTDHVLP) the chain is on the cytoplasmic side. Residues 277–297 (VTARSIAIVIPPIGLGLATII) form a helical membrane-spanning segment. Residues 298–318 (DRRLTGKRLFNAQLYPQGKTA) are Periplasmic-facing. The helical transmembrane segment at 319 to 339 (MFLAFMGISEGAIPFALESPI) threads the bilayer. Over 340–341 (TA) the chain is Cytoplasmic. The helical transmembrane segment at 342-362 (IPSYMVGAIVGSTAAVWLGAV) threads the bilayer. Residues 363–378 (QWFPESAIWAWPLVTN) lie on the Periplasmic side of the membrane. A helical membrane pass occupies residues 379 to 399 (LGVYMAGIALGAIITALMVVF). At 400–415 (LRLMMFRKGKLLIESL) the chain is on the cytoplasmic side.

The protein localises to the cell inner membrane. The phosphoenolpyruvate-dependent sugar phosphotransferase system (PTS), a major carbohydrate active -transport system, catalyzes the phosphorylation of incoming sugar substrates concomitant with their translocation across the cell membrane. The sequence is that of Fructose-like permease IIC component (fryC) from Escherichia coli O6:H1 (strain CFT073 / ATCC 700928 / UPEC).